We begin with the raw amino-acid sequence, 167 residues long: Mannose-specific lectin (167 aa).

The first 24 residues, 1–24, serve as a signal peptide directing secretion; it reads MAFSISSTMIFLLSLALFSTLVSA. The 114-residue stretch at 25-138 folds into the Bulb-type lectin domain; that stretch reads DNHLLPGERL…PIFATGTNRF (114 aa). A disulfide bridge connects residues cysteine 53 and cysteine 76.

In terms of assembly, homotetramer. Expressed in the pseudobulb, with highest levels of expression in the non-swollen internode (at protein level).

It is found in the secreted. Its function is as follows. Mannose-specific lectin. Shows agglutinating activity towards chicken erythrocytes. Has antifungal activity against A.alternata and Collectotrichum species. The polypeptide is Mannose-specific lectin (Dendrobium findlayanum (Findlay's orchid)).